The following is a 200-amino-acid chain: Potassium-transporting ATPase KdpC subunit (200 aa).

Residues 13 to 33 (ITLIFWLITAIIYPLAILVVG) traverse the membrane as a helical segment.

It belongs to the KdpC family. As to quaternary structure, the system is composed of three essential subunits: KdpA, KdpB and KdpC.

The protein localises to the cell membrane. Part of the high-affinity ATP-driven potassium transport (or Kdp) system, which catalyzes the hydrolysis of ATP coupled with the electrogenic transport of potassium into the cytoplasm. This subunit acts as a catalytic chaperone that increases the ATP-binding affinity of the ATP-hydrolyzing subunit KdpB by the formation of a transient KdpB/KdpC/ATP ternary complex. In Anabaena sp. (strain L31), this protein is Potassium-transporting ATPase KdpC subunit.